Reading from the N-terminus, the 513-residue chain is ATP synthase subunit alpha (513 aa).

169 to 176 (GDRQTGKT) contacts ATP.

The protein belongs to the ATPase alpha/beta chains family. F-type ATPases have 2 components, CF(1) - the catalytic core - and CF(0) - the membrane proton channel. CF(1) has five subunits: alpha(3), beta(3), gamma(1), delta(1), epsilon(1). CF(0) has three main subunits: a(1), b(2) and c(9-12). The alpha and beta chains form an alternating ring which encloses part of the gamma chain. CF(1) is attached to CF(0) by a central stalk formed by the gamma and epsilon chains, while a peripheral stalk is formed by the delta and b chains.

Its subcellular location is the cell inner membrane. It carries out the reaction ATP + H2O + 4 H(+)(in) = ADP + phosphate + 5 H(+)(out). In terms of biological role, produces ATP from ADP in the presence of a proton gradient across the membrane. The alpha chain is a regulatory subunit. This chain is ATP synthase subunit alpha, found in Bordetella bronchiseptica (strain ATCC BAA-588 / NCTC 13252 / RB50) (Alcaligenes bronchisepticus).